A 326-amino-acid polypeptide reads, in one-letter code: Amino acid--[acyl-carrier-protein] ligase 1 (326 aa).

Cys131 is a Zn(2+) binding site. ATP is bound by residues Arg159, Glu161, and 168–169; that span reads RL. Glu176 lines the Zn(2+) pocket. Position 176 (Glu176) interacts with an L-alpha-amino acid. Residues Lys235 and 250-253 each bind ATP; that span reads ACMS. Cys279 is a Zn(2+) binding site. Arg286 contributes to the ATP binding site.

Belongs to the class-II aminoacyl-tRNA synthetase family. Amino acid--[acyl-carrier-protein] ligase subfamily. Homodimer. Zn(2+) is required as a cofactor.

It catalyses the reaction an L-alpha-amino acid + holo-[ACP] + ATP = an L-alpha-aminoacyl-[ACP] + AMP + diphosphate. Its function is as follows. Catalyzes the ATP-dependent activation of L-glycine and its transfer to the phosphopantetheine prosthetic group covalently attached to the vicinal carrier protein bsr0959 of yet unknown function. May participate in nonribosomal peptide synthesis or related processes. L-alanine is a poor substrate whereas L-serine or D-amino acids are not substrates for ATP-dependent activation. Does not display tRNA aminoacylation activity. This is Amino acid--[acyl-carrier-protein] ligase 1 from Bradyrhizobium diazoefficiens (strain JCM 10833 / BCRC 13528 / IAM 13628 / NBRC 14792 / USDA 110).